The primary structure comprises 206 residues: MSGIIGKKVGMTSVYDAVGNYVPCTVIEAGPCVITQIKTVETDGYKAVQLAFDDKKEKSTTKPLLGHFKKAGVSPKRKLVEFKGFENELTLGQSLAAQDVFVEGDFVDVVGTAKGRGFQGVVKRHGFGGVGGQTHGQHNRARHAGSIGACSFPARVFKGTRMAGRMGNNRVKIQNLQILKVYPEHNLLVVSGSVPGSKNSYVLIEK.

Belongs to the universal ribosomal protein uL3 family. As to quaternary structure, part of the 50S ribosomal subunit. Forms a cluster with proteins L14 and L19.

Functionally, one of the primary rRNA binding proteins, it binds directly near the 3'-end of the 23S rRNA, where it nucleates assembly of the 50S subunit. This Cytophaga hutchinsonii (strain ATCC 33406 / DSM 1761 / CIP 103989 / NBRC 15051 / NCIMB 9469 / D465) protein is Large ribosomal subunit protein uL3.